The chain runs to 166 residues: uncharacterized protein (166 aa).

This is an uncharacterized protein from Homo sapiens (Human).